Here is a 209-residue protein sequence, read N- to C-terminus: Outer-membrane lipoprotein carrier protein (209 aa).

The first 21 residues, 1–21, serve as a signal peptide directing secretion; the sequence is MHRQLRYAVLATALFASTAFA.

It belongs to the LolA family. In terms of assembly, monomer.

The protein localises to the periplasm. Functionally, participates in the translocation of lipoproteins from the inner membrane to the outer membrane. Only forms a complex with a lipoprotein if the residue after the N-terminal Cys is not an aspartate (The Asp acts as a targeting signal to indicate that the lipoprotein should stay in the inner membrane). The polypeptide is Outer-membrane lipoprotein carrier protein (Xanthomonas campestris pv. campestris (strain 8004)).